We begin with the raw amino-acid sequence, 329 residues long: Cathepsin K (329 aa).

Positions 1 to 15 (MWVFKFLLLPVVSFA) are cleaved as a signal peptide. A propeptide spans 16 to 114 (LSPEETLDTQ…TLYTPEWEGR (99 aa)) (activation peptide). Residue N103 is glycosylated (N-linked (GlcNAc...) asparagine). Disulfide bonds link C136–C177 and C170–C210. The active site involves C139. N213 carries N-linked (GlcNAc...) asparagine glycosylation. C269 and C318 form a disulfide bridge. Catalysis depends on residues H276 and N296.

Belongs to the peptidase C1 family.

Its subcellular location is the lysosome. The protein resides in the secreted. It localises to the apical cell membrane. The catalysed reaction is Broad proteolytic activity. With small-molecule substrates and inhibitors, the major determinant of specificity is P2, which is preferably Leu, Met &gt; Phe, and not Arg.. In terms of biological role, thiol protease involved in osteoclastic bone resorption and may participate partially in the disorder of bone remodeling. Displays potent endoprotease activity against fibrinogen at acid pH. May play an important role in extracellular matrix degradation. Involved in the release of thyroid hormone thyroxine (T4) by limited proteolysis of TG/thyroglobulin in the thyroid follicle lumen. The chain is Cathepsin K (Ctsk) from Rattus norvegicus (Rat).